Reading from the N-terminus, the 443-residue chain is MESLASLYKNHIATLQERTRDALARFKLDALLIHSGELFNVFLDDHPYPFKVNPQFKAWVPVTQVPNCWLLVDGVNKPKLWFYLPVDYWHNVEPLPTSFWTEDVEVIALPKADGIGSLLPAARGNIGYIGPVPERALQLGIEASNINPKGVIDYLHYYRSFKTEYELACMREAQKMAVNGHRAAEEAFRSGMSEFDINIAYLTATGHRDTDVPYSNIVALNEHAAVLHYTKLDHQAPEEMRSFLLDAGAEYNGYAADLTRTWSAKSDNDYAQLVKDVNDEQLALIATMKAGVSYVDYHIQFHQRIAKLLRKHQIITDMSEEAMVENDLTGPFMPHGIGHPLGLQVHDVAGFMQDDSGTHLAAPAKYPYLRCTRILQPGMVLTIEPGIYFIESLLAPWREGQFSKHFNWQKIEALKPFGGIRIEDNVVIHENNVENMTRDLKLA.

5 residues coordinate Mn(2+): Asp246, Asp257, His339, Glu384, and Glu423.

Belongs to the peptidase M24B family. Bacterial-type prolidase subfamily. Mn(2+) serves as cofactor.

The enzyme catalyses Xaa-L-Pro dipeptide + H2O = an L-alpha-amino acid + L-proline. Splits dipeptides with a prolyl residue in the C-terminal position. The sequence is that of Xaa-Pro dipeptidase from Escherichia coli (strain 55989 / EAEC).